A 400-amino-acid polypeptide reads, in one-letter code: Putative C-type lectin domain family 20 member A (400 aa).

The N-terminal stretch at 1–20 (MLPRALLLSFCAAALQLVSS) is a signal peptide. 2 C-type lectin domains span residues 26-131 (LVKE…FLCY) and 159-275 (ISGQ…FFCF). Disulfide bonds link Cys-40–Cys-130, Cys-105–Cys-122, Cys-180–Cys-274, and Cys-248–Cys-266. The tract at residues 287–346 (ELPPLFHTSPTEMTEETTPRPGRAVASVGSGTDRRDTAAATEAQHLSSESKEKTSAQKSG) is disordered.

The sequence is that of Putative C-type lectin domain family 20 member A from Homo sapiens (Human).